The primary structure comprises 145 residues: Small ribosomal subunit protein eS12A (145 aa).

Belongs to the eukaryotic ribosomal protein eS12 family. As to quaternary structure, component of the small ribosomal subunit (SSU). Mature yeast ribosomes consist of a small (40S) and a large (60S) subunit. The 40S small subunit contains 1 molecule of ribosomal RNA (18S rRNA) and at least 33 different proteins. The large 60S subunit contains 3 rRNA molecules (25S, 5.8S and 5S rRNA) and at least 46 different proteins.

It is found in the cytoplasm. Component of the ribosome, a large ribonucleoprotein complex responsible for the synthesis of proteins in the cell. The small ribosomal subunit (SSU) binds messenger RNAs (mRNAs) and translates the encoded message by selecting cognate aminoacyl-transfer RNA (tRNA) molecules. The large subunit (LSU) contains the ribosomal catalytic site termed the peptidyl transferase center (PTC), which catalyzes the formation of peptide bonds, thereby polymerizing the amino acids delivered by tRNAs into a polypeptide chain. The nascent polypeptides leave the ribosome through a tunnel in the LSU and interact with protein factors that function in enzymatic processing, targeting, and the membrane insertion of nascent chains at the exit of the ribosomal tunnel. The sequence is that of Small ribosomal subunit protein eS12A (rps1201) from Schizosaccharomyces pombe (strain 972 / ATCC 24843) (Fission yeast).